The sequence spans 492 residues: N-succinylglutamate 5-semialdehyde dehydrogenase (492 aa).

Residue 220 to 225 (GRANTG) coordinates NAD(+). Catalysis depends on residues Glu243 and Cys277.

Belongs to the aldehyde dehydrogenase family. AstD subfamily.

It carries out the reaction N-succinyl-L-glutamate 5-semialdehyde + NAD(+) + H2O = N-succinyl-L-glutamate + NADH + 2 H(+). The protein operates within amino-acid degradation; L-arginine degradation via AST pathway; L-glutamate and succinate from L-arginine: step 4/5. Its function is as follows. Catalyzes the NAD-dependent reduction of succinylglutamate semialdehyde into succinylglutamate. This is N-succinylglutamate 5-semialdehyde dehydrogenase from Shigella boydii serotype 4 (strain Sb227).